The following is a 396-amino-acid chain: Elongation factor Tu (396 aa).

Residues 10–206 (KPHVNVGTIG…ALDTYIPTPE (197 aa)) enclose the tr-type G domain. Residues 19–26 (GHVDHGKT) form a G1 region. Residue 19–26 (GHVDHGKT) participates in GTP binding. Residue Thr-26 coordinates Mg(2+). Positions 60-64 (GITIN) are G2. Positions 81 to 84 (DCPG) are G3. Residues 81–85 (DCPGH) and 136–139 (NKCD) each bind GTP. Positions 136-139 (NKCD) are G4. Residues 174-176 (SAK) are G5.

Belongs to the TRAFAC class translation factor GTPase superfamily. Classic translation factor GTPase family. EF-Tu/EF-1A subfamily. In terms of assembly, monomer.

It localises to the cytoplasm. The catalysed reaction is GTP + H2O = GDP + phosphate + H(+). Functionally, GTP hydrolase that promotes the GTP-dependent binding of aminoacyl-tRNA to the A-site of ribosomes during protein biosynthesis. This is Elongation factor Tu from Burkholderia cepacia (Pseudomonas cepacia).